Reading from the N-terminus, the 925-residue chain is Protein translocase subunit SecA (925 aa).

Residues Q87, 105 to 109 (GEGKT), and D512 contribute to the ATP site. Residues C910, C912, C921, and H922 each contribute to the Zn(2+) site.

Belongs to the SecA family. In terms of assembly, monomer and homodimer. Part of the essential Sec protein translocation apparatus which comprises SecA, SecYEG and auxiliary proteins SecDF-YajC and YidC. Requires Zn(2+) as cofactor.

The protein localises to the cell inner membrane. It is found in the cytoplasm. The enzyme catalyses ATP + H2O + cellular proteinSide 1 = ADP + phosphate + cellular proteinSide 2.. Functionally, part of the Sec protein translocase complex. Interacts with the SecYEG preprotein conducting channel. Has a central role in coupling the hydrolysis of ATP to the transfer of proteins into and across the cell membrane, serving both as a receptor for the preprotein-SecB complex and as an ATP-driven molecular motor driving the stepwise translocation of polypeptide chains across the membrane. This Psychrobacter sp. (strain PRwf-1) protein is Protein translocase subunit SecA.